The sequence spans 367 residues: MKFQLHRTDGLARRGTLSLTHGVVETPAFMPVGTYGAVKTMSPADLQVINAHIVLGNTFHLWLRPGLQVIEAHGGLHRFMGWDGPILTDSGGFQVFSLGVLRKITEQGVKFKSPVNGDTCFLTPEESMRIQYVLNSDIVMIFDECTPYPADERAVGESMELSLRWAERSRQAHDEGGNRNGLFGIVQGGMYEKLRDESLAGLLDIGFDGYAIGGLSVGEPKADMRRILRHTAPGLPAGKPRYLMGVGTPADIVDAVAQGMDMFDCVLPTRNARNGWLYTRTGVIKLRNSQYRLDTRPADEQCTCYTCRHFSRAYLHHLQRTGEILGARLNTLHNLYYYQQLMGEIRTAIENGQFQEYAQAFQAQTAS.

Asp-89 serves as the catalytic Proton acceptor. Substrate-binding positions include 89–93, Asp-143, Gln-187, and Gly-214; that span reads DSGGF. Residues 245–251 form an RNA binding region; that stretch reads GVGTPAD. Asp-264 serves as the catalytic Nucleophile. The tract at residues 269 to 273 is RNA binding; important for wobble base 34 recognition; sequence TRNAR. Positions 302, 304, 307, and 333 each coordinate Zn(2+).

The protein belongs to the queuine tRNA-ribosyltransferase family. As to quaternary structure, homodimer. Within each dimer, one monomer is responsible for RNA recognition and catalysis, while the other monomer binds to the replacement base PreQ1. Requires Zn(2+) as cofactor.

It carries out the reaction 7-aminomethyl-7-carbaguanine + guanosine(34) in tRNA = 7-aminomethyl-7-carbaguanosine(34) in tRNA + guanine. It participates in tRNA modification; tRNA-queuosine biosynthesis. Its function is as follows. Catalyzes the base-exchange of a guanine (G) residue with the queuine precursor 7-aminomethyl-7-deazaguanine (PreQ1) at position 34 (anticodon wobble position) in tRNAs with GU(N) anticodons (tRNA-Asp, -Asn, -His and -Tyr). Catalysis occurs through a double-displacement mechanism. The nucleophile active site attacks the C1' of nucleotide 34 to detach the guanine base from the RNA, forming a covalent enzyme-RNA intermediate. The proton acceptor active site deprotonates the incoming PreQ1, allowing a nucleophilic attack on the C1' of the ribose to form the product. After dissociation, two additional enzymatic reactions on the tRNA convert PreQ1 to queuine (Q), resulting in the hypermodified nucleoside queuosine (7-(((4,5-cis-dihydroxy-2-cyclopenten-1-yl)amino)methyl)-7-deazaguanosine). This chain is Queuine tRNA-ribosyltransferase, found in Nitrosospira multiformis (strain ATCC 25196 / NCIMB 11849 / C 71).